A 335-amino-acid polypeptide reads, in one-letter code: Glyceraldehyde-3-phosphate dehydrogenase 2 (335 aa).

NAD(+) is bound by residues 12 to 13, Asp35, Arg79, and Ser121; that span reads RI. D-glyceraldehyde 3-phosphate is bound by residues 152 to 154 and Thr183; that span reads SCT. Residue Cys153 is the Nucleophile of the active site. Residue Asn184 participates in NAD(+) binding. D-glyceraldehyde 3-phosphate is bound by residues Arg198, 211–212, and Arg234; that span reads TG. Asn316 serves as a coordination point for NAD(+).

The protein belongs to the glyceraldehyde-3-phosphate dehydrogenase family. Homotetramer.

Its subcellular location is the cytoplasm. The catalysed reaction is D-glyceraldehyde 3-phosphate + phosphate + NAD(+) = (2R)-3-phospho-glyceroyl phosphate + NADH + H(+). The protein operates within carbohydrate degradation; glycolysis; pyruvate from D-glyceraldehyde 3-phosphate: step 1/5. Its activity is regulated as follows. Inhibited by pentalenolactone. In terms of biological role, catalyzes the oxidative phosphorylation of glyceraldehyde 3-phosphate (G3P) to 1,3-bisphosphoglycerate (BPG) using the cofactor NAD. The first reaction step involves the formation of a hemiacetal intermediate between G3P and a cysteine residue, and this hemiacetal intermediate is then oxidized to a thioester, with concomitant reduction of NAD to NADH. The reduced NADH is then exchanged with the second NAD, and the thioester is attacked by a nucleophilic inorganic phosphate to produce BPG. The chain is Glyceraldehyde-3-phosphate dehydrogenase 2 (gap2) from Streptomyces avermitilis (strain ATCC 31267 / DSM 46492 / JCM 5070 / NBRC 14893 / NCIMB 12804 / NRRL 8165 / MA-4680).